Here is a 388-residue protein sequence, read N- to C-terminus: Mannitol-1-phosphate 5-dehydrogenase (388 aa).

5–16 contributes to the NAD(+) binding site; it reads AIQFGGGNIGRG. The active site involves Lys-213.

The protein belongs to the mannitol dehydrogenase family. As to quaternary structure, monomer.

The catalysed reaction is D-mannitol 1-phosphate + NAD(+) = beta-D-fructose 6-phosphate + NADH + H(+). Functionally, catalyzes the NAD(H)-dependent interconversion of D-fructose 6-phosphate and D-mannitol 1-phosphate in the mannitol metabolic pathway. The chain is Mannitol-1-phosphate 5-dehydrogenase (mpdA) from Aspergillus terreus (strain NIH 2624 / FGSC A1156).